Consider the following 355-residue polypeptide: Gibberellin 3-beta-dioxygenase 4 (355 aa).

One can recognise a Fe2OG dioxygenase domain in the interval 203-303; the sequence is GRGAIRLNHY…RISIAYLWGG (101 aa). 3 residues coordinate Fe cation: H227, D229, and H284. R294 is a catalytic residue.

This sequence belongs to the iron/ascorbate-dependent oxidoreductase family. GA3OX subfamily. Requires L-ascorbate as cofactor. The cofactor is Fe cation. In terms of tissue distribution, expressed in siliques and in seeds, specifically at the rim of the embryo and the outer integument. Also expressed in flowers. Not detected in roots, stems and leaves.

It carries out the reaction gibberellin A20 + 2-oxoglutarate + O2 = gibberellin A1 + succinate + CO2. It functions in the pathway plant hormone biosynthesis; gibberellin biosynthesis. Converts the inactive gibberellin (GA) precursors GA9 and GA20 in the bioactives gibberellins GA4 and GA1. Involved in the production of bioactive GA for reproductive development. This chain is Gibberellin 3-beta-dioxygenase 4, found in Arabidopsis thaliana (Mouse-ear cress).